The sequence spans 79 residues: Small ribosomal subunit protein bS18B (79 aa).

Basic and acidic residues predominate over residues 1–11; it reads MPRPRKADRTP. The segment at 1-24 is disordered; the sequence is MPRPRKADRTPARQRPNPLDRDGV.

The protein belongs to the bacterial ribosomal protein bS18 family. In terms of assembly, part of the 30S ribosomal subunit. Forms a tight heterodimer with protein bS6.

Its function is as follows. Binds as a heterodimer with protein bS6 to the central domain of the 16S rRNA, where it helps stabilize the platform of the 30S subunit. This is Small ribosomal subunit protein bS18B from Streptomyces coelicolor (strain ATCC BAA-471 / A3(2) / M145).